The sequence spans 492 residues: Glutamyl-tRNA(Gln) amidotransferase subunit A (492 aa).

Catalysis depends on charge relay system residues Lys84 and Ser159. Ser183 (acyl-ester intermediate) is an active-site residue.

It belongs to the amidase family. GatA subfamily. Heterotrimer of A, B and C subunits.

The catalysed reaction is L-glutamyl-tRNA(Gln) + L-glutamine + ATP + H2O = L-glutaminyl-tRNA(Gln) + L-glutamate + ADP + phosphate + H(+). Functionally, allows the formation of correctly charged Gln-tRNA(Gln) through the transamidation of misacylated Glu-tRNA(Gln) in organisms which lack glutaminyl-tRNA synthetase. The reaction takes place in the presence of glutamine and ATP through an activated gamma-phospho-Glu-tRNA(Gln). The sequence is that of Glutamyl-tRNA(Gln) amidotransferase subunit A from Anaeromyxobacter sp. (strain K).